A 179-amino-acid chain; its full sequence is MIFYLHGFDATSPGNHEKMRQLQFIDPDVRLVSYSTLHPKHDMQHLLKEVAKQMKHSDDPAPLMVGVGLGAYWAERIGFLNGLKSVLINPNLHPEDNMQGKIDRPEEYADIANKCVSQFREKNTHKAMCIFSVNDEMFDNQQLASELSAYYSIDWDDVQPHKFPQLAAHLPKIKAFKLA.

The protein belongs to the UPF0227 family.

In Shewanella baltica (strain OS195), this protein is UPF0227 protein Sbal195_2522.